The sequence spans 416 residues: RNA-editing ligase 2, mitochondrial (416 aa).

Residues 1–17 (MLRRLGVRHFRRTPLLF) constitute a mitochondrion transit peptide. Residues 29 to 31 (TEI), 56 to 62 (EKVHGAN), R79, E126, F173, and 269 to 271 (KFK) contribute to the ATP site. K57 functions as the N6-AMP-lysine intermediate in the catalytic mechanism.

Belongs to the RNA ligase 2 family. Component of the RNA editing complex, a 1600 kDa complex composed of at least 20 proteins.

The protein localises to the mitochondrion. The enzyme catalyses ATP + (ribonucleotide)n-3'-hydroxyl + 5'-phospho-(ribonucleotide)m = (ribonucleotide)n+m + AMP + diphosphate.. RNA editing in kinetoplastid mitochondria inserts and deletes uridylates at multiple sites in pre-mRNAs as directed by guide RNAs. This chain is RNA-editing ligase 2, mitochondrial (REL2), found in Trypanosoma brucei brucei (strain 927/4 GUTat10.1).